A 411-amino-acid chain; its full sequence is Serpin A3-2 (411 aa).

A signal peptide spans 1–24 (MRAERTSFLLALGLLVAGIRSVHC). N-linked (GlcNAc...) asparagine glycosylation is found at Asn100, Asn180, Asn230, and Asn264.

It belongs to the serpin family. As to quaternary structure, homodimer.

It is found in the cytoplasmic vesicle. The protein resides in the secretory vesicle. The protein localises to the chromaffin granule. It localises to the secreted. In terms of biological role, serine protease inhibitor. This chain is Serpin A3-2, found in Bos taurus (Bovine).